A 628-amino-acid polypeptide reads, in one-letter code: Hepatocyte nuclear factor 1-alpha (628 aa).

The tract at residues 1 to 31 (MVSKLSQLQTELLAALLESGLSKEALIQALG) is dimerization. The 32-residue stretch at 1-32 (MVSKLSQLQTELLAALLESGLSKEALIQALGE) folds into the HNF-p1 domain. Positions 47–79 (GESCGGTRGDLTELPNGLGETRGSEDDTDDDGE) are disordered. A Phosphoserine modification is found at Ser70. Thr74 bears the Phosphothreonine mark. In terms of domain architecture, POU-specific atypical spans 87–182 (KELENLSPEE…VAQQFTHAGQ (96 aa)). Ser93 bears the Phosphoserine mark. A Glycyl lysine isopeptide (Lys-Gly) (interchain with G-Cter in ubiquitin) cross-link involves residue Lys117. Interaction with DNA regions lie at residues 130 to 132 (QRE), 143 to 149 (HLSQHLN), 155 to 158 (KTQK), and 203 to 206 (RFKW). Residues 183–205 (GGLIEEPTGDELPTKKGRRNRFK) form a disordered region. The Nuclear localization signal signature appears at 197–205 (KKGRRNRFK). The segment at residues 199 to 279 (GRRNRFKWGP…NRRKEEAFRH (81 aa)) is a DNA-binding region (homeobox; HNF1-type). At Ser247 the chain carries Phosphoserine. Interaction with DNA stretches follow at residues 263-265 (RVY) and 270-273 (NRRK). 2 disordered regions span residues 284–338 (DTYN…SSSG) and 541–585 (FTSD…LSTS). A compositionally biased stretch (pro residues) spans 288 to 298 (GPPPGPGPGPA). Phosphoserine is present on Ser313. Polar residues-rich tracts occupy residues 324 to 338 (QSATSEAAEVPSSSG) and 558 to 575 (SPATTIHIPSQDPSNIQH).

Belongs to the HNF1 homeobox family. In terms of assembly, binds DNA as a dimer. Heterotetramer with PCBD1; formed by a dimer of dimers. Interacts with PCBD1. Interacts with BHLHE41. Interacts with NR5A2. Interacts with SPOP; this interaction promotes ubiquitination and degradation of HNF1A. In terms of processing, ubiquitinated in s SPOP-dependent manner; leading to prteasomal degradation. As to expression, liver.

It localises to the nucleus. In terms of biological role, transcriptional activator that regulates the tissue specific expression of multiple genes, especially in pancreatic islet cells and in liver. Binds to the inverted palindrome 5'-GTTAATNATTAAC-3'. Activates the transcription of CYP1A2, CYP2E1 and CYP3A11. The sequence is that of Hepatocyte nuclear factor 1-alpha (Hnf1a) from Rattus norvegicus (Rat).